A 277-amino-acid chain; its full sequence is 2-dehydro-3-deoxyphosphooctonate aldolase (277 aa).

Belongs to the KdsA family.

The protein localises to the cytoplasm. It carries out the reaction D-arabinose 5-phosphate + phosphoenolpyruvate + H2O = 3-deoxy-alpha-D-manno-2-octulosonate-8-phosphate + phosphate. The protein operates within carbohydrate biosynthesis; 3-deoxy-D-manno-octulosonate biosynthesis; 3-deoxy-D-manno-octulosonate from D-ribulose 5-phosphate: step 2/3. It functions in the pathway bacterial outer membrane biogenesis; lipopolysaccharide biosynthesis. The polypeptide is 2-dehydro-3-deoxyphosphooctonate aldolase (Brucella anthropi (strain ATCC 49188 / DSM 6882 / CCUG 24695 / JCM 21032 / LMG 3331 / NBRC 15819 / NCTC 12168 / Alc 37) (Ochrobactrum anthropi)).